Here is a 387-residue protein sequence, read N- to C-terminus: UDP-N-acetylglucosamine--N-acetylmuramyl-(pentapeptide) pyrophosphoryl-undecaprenol N-acetylglucosamine transferase (387 aa).

UDP-N-acetyl-alpha-D-glucosamine-binding positions include T26–G28, N137, R177, S205, and Q306.

Belongs to the glycosyltransferase 28 family. MurG subfamily.

The protein localises to the cell inner membrane. It catalyses the reaction di-trans,octa-cis-undecaprenyl diphospho-N-acetyl-alpha-D-muramoyl-L-alanyl-D-glutamyl-meso-2,6-diaminopimeloyl-D-alanyl-D-alanine + UDP-N-acetyl-alpha-D-glucosamine = di-trans,octa-cis-undecaprenyl diphospho-[N-acetyl-alpha-D-glucosaminyl-(1-&gt;4)]-N-acetyl-alpha-D-muramoyl-L-alanyl-D-glutamyl-meso-2,6-diaminopimeloyl-D-alanyl-D-alanine + UDP + H(+). It participates in cell wall biogenesis; peptidoglycan biosynthesis. Functionally, cell wall formation. Catalyzes the transfer of a GlcNAc subunit on undecaprenyl-pyrophosphoryl-MurNAc-pentapeptide (lipid intermediate I) to form undecaprenyl-pyrophosphoryl-MurNAc-(pentapeptide)GlcNAc (lipid intermediate II). This chain is UDP-N-acetylglucosamine--N-acetylmuramyl-(pentapeptide) pyrophosphoryl-undecaprenol N-acetylglucosamine transferase, found in Rhodospirillum rubrum (strain ATCC 11170 / ATH 1.1.1 / DSM 467 / LMG 4362 / NCIMB 8255 / S1).